Here is an 83-residue protein sequence, read N- to C-terminus: Small ribosomal subunit protein eS21 (83 aa).

It belongs to the eukaryotic ribosomal protein eS21 family. Component of the 40S small ribosomal subunit. Interacts with sta.

The protein resides in the cytoplasm. It localises to the cytosol. The protein localises to the rough endoplasmic reticulum. In terms of biological role, may be an associated component of the ribosome rather than a core structural subunit. May act as a translation initiation factor. Has a role in regulation of cell proliferation in the hematopoietic organs and the imaginal disks of larva. In Drosophila grimshawi (Hawaiian fruit fly), this protein is Small ribosomal subunit protein eS21 (RpS21).